The chain runs to 357 residues: MGIQHMLPSTQTAIIAGPQGEFQLSHDVPVTPLADDEIIMKTAAVALNPVDTKLVGDFITPGAIFGFDCAGVIVAVGPKVGNGLAIGDRVCGSARGMNREKPLGGAFAEYVMLPADLTLRIPPAMTFAEAASLGTALVSACMSLFWTMQIPASLQEPAEKPFPVLVYGGSTATGTMLLQVLKICGVRTLTTCSPKNFDLVRSYGADEVFDYNSPTCAQDIREATRNNLKYAVDCITEDSTIKICYSAIGRAGGQYIALNPYPEHLATRKVIKPGWILATLITGEGSAWPEPYHREPDPEIRALAKPAYSAVQKLLDEGRLRSHPIRVKDGGLAAVLDGVEVLRKGEISGQKLVYCFN.

Position 50 to 53 (50 to 53 (VDTK)) interacts with NADP(+). 135–142 (TALVSACM) contacts substrate. Residues 170–173 (STAT), 193–196 (SPKN), Tyr-211, and 258–259 (LN) contribute to the NADP(+) site. 278-282 (ATLIT) contributes to the substrate binding site. 347–348 (IS) contacts NADP(+).

It belongs to the zinc-containing alcohol dehydrogenase family. In terms of assembly, monomer.

It participates in mycotoxin biosynthesis. Trans-enoyl reductase; part of the gene cluster that mediates the biosynthesis of burnettramic acids, an unusual class of bolaamphiphilic pyrrolizidinediones that display potent antibacterial, antifungal, and cytotoxic activities. The first step of the biosynthesis of burnettramic acids is the hydroxylation of proline by the proline hydroxylase buaE to generate 4-hydroxyproline. The PKS-NRPS buaA and trans-enoyl reductase buaC construct the highly reduced polyketide chain, and the condensation (C) domain of buaA then catalyzes the amide bond formation with the activated 4-hydroxyproline. This is followed by the R domain releasing the nascent polyketide-peptide directly via a Dieckmann condensation to afford a tetramic acid fused to the hydroxyproline, generating the bicyclic pyrrolidinedione moiety. The cytochrome P450 monooxygenases buaD and buaG are likely responsible for the multiple hydroxylations on the polyketide chain and its terminus, although in the heterologous context, buaD does not appear to be required. Therefore, while buaG may be a multifunctional cytochrome P450 monooxygenase, it cannot be ruled out that the two secondary alcohols on the polyketide chain could have an acetate origin. Finally, the glycosyltransferase buaB transfers beta-D-mannose to the aglycone burnettramic acid A to form burnettramic acid A. Burnettramic acid B is a minor cis-pyrrolizidine epimer of burnettramic acid A and it is likely that small amounts of it form naturally in acidic environments. In Petromyces alliaceus (Aspergillus alliaceus), this protein is Trans-enoyl reductase buaC.